A 165-amino-acid polypeptide reads, in one-letter code: Chorismate pyruvate-lyase (165 aa).

Substrate contacts are provided by R77, L115, and E156.

Belongs to the UbiC family. As to quaternary structure, monomer.

Its subcellular location is the cytoplasm. It carries out the reaction chorismate = 4-hydroxybenzoate + pyruvate. The protein operates within cofactor biosynthesis; ubiquinone biosynthesis. In terms of biological role, removes the pyruvyl group from chorismate, with concomitant aromatization of the ring, to provide 4-hydroxybenzoate (4HB) for the ubiquinone pathway. This chain is Chorismate pyruvate-lyase, found in Salmonella typhi.